The primary structure comprises 297 residues: MKDSALIELFLNEIWIEKQLSQNTIASYRLDLTALIQWLEKQQLTLINLDAIDLQTFLGERLNQGYKATSTARLLSAMRKLFQYLYREKYRTDDPSAVLSSPKLPSRLPKYLTEQQVTDLLNSPDVDIPLELRDKAMMELLYATGLRVTELVSLTIENININQGIVRVVGKGNKERIVPIGEEATYWIRQFMLYGRPFLLHGQSSDVVFPSKRALQMTRQTFWHRIKHYALLSDIDINSLSPHVLRHAFATHLVNHGADLRVVQMLLGHSDLSTTQIYTHVAKERLKHLHERYHPRG.

In terms of domain architecture, Core-binding (CB) spans 1-86 (MKDSALIELF…AMRKLFQYLY (86 aa)). One can recognise a Tyr recombinase domain in the interval 107-291 (RLPKYLTEQQ…AKERLKHLHE (185 aa)). Residues Arg-147, Lys-171, His-243, Arg-246, and His-269 contribute to the active site. The O-(3'-phospho-DNA)-tyrosine intermediate role is filled by Tyr-278.

This sequence belongs to the 'phage' integrase family. XerD subfamily. As to quaternary structure, forms a cyclic heterotetrameric complex composed of two molecules of XerC and two molecules of XerD.

It localises to the cytoplasm. In terms of biological role, site-specific tyrosine recombinase, which acts by catalyzing the cutting and rejoining of the recombining DNA molecules. The XerC-XerD complex is essential to convert dimers of the bacterial chromosome into monomers to permit their segregation at cell division. It also contributes to the segregational stability of plasmids. In Pasteurella multocida (strain Pm70), this protein is Tyrosine recombinase XerD.